The primary structure comprises 517 residues: UDP-N-acetylmuramoyl-tripeptide--D-alanyl-D-alanine ligase (517 aa).

Position 138–144 (138–144) interacts with ATP; the sequence is GSSGKTS.

It belongs to the MurCDEF family. MurF subfamily.

The protein resides in the cytoplasm. The catalysed reaction is D-alanyl-D-alanine + UDP-N-acetyl-alpha-D-muramoyl-L-alanyl-gamma-D-glutamyl-meso-2,6-diaminopimelate + ATP = UDP-N-acetyl-alpha-D-muramoyl-L-alanyl-gamma-D-glutamyl-meso-2,6-diaminopimeloyl-D-alanyl-D-alanine + ADP + phosphate + H(+). Its pathway is cell wall biogenesis; peptidoglycan biosynthesis. Functionally, involved in cell wall formation. Catalyzes the final step in the synthesis of UDP-N-acetylmuramoyl-pentapeptide, the precursor of murein. The sequence is that of UDP-N-acetylmuramoyl-tripeptide--D-alanyl-D-alanine ligase from Mycobacterium leprae (strain TN).